The primary structure comprises 886 residues: Alanine--tRNA ligase (886 aa).

Positions 564, 568, 666, and 670 each coordinate Zn(2+).

The protein belongs to the class-II aminoacyl-tRNA synthetase family. Requires Zn(2+) as cofactor.

Its subcellular location is the cytoplasm. The enzyme catalyses tRNA(Ala) + L-alanine + ATP = L-alanyl-tRNA(Ala) + AMP + diphosphate. Its function is as follows. Catalyzes the attachment of alanine to tRNA(Ala) in a two-step reaction: alanine is first activated by ATP to form Ala-AMP and then transferred to the acceptor end of tRNA(Ala). Also edits incorrectly charged Ser-tRNA(Ala) and Gly-tRNA(Ala) via its editing domain. This is Alanine--tRNA ligase from Prochlorococcus marinus (strain AS9601).